The chain runs to 180 residues: Large ribosomal subunit protein uL5 (180 aa).

The protein belongs to the universal ribosomal protein uL5 family. As to quaternary structure, part of the 50S ribosomal subunit; part of the 5S rRNA/L5/L18/L25 subcomplex. Contacts the 5S rRNA and the P site tRNA. Forms a bridge to the 30S subunit in the 70S ribosome.

Its function is as follows. This is one of the proteins that bind and probably mediate the attachment of the 5S RNA into the large ribosomal subunit, where it forms part of the central protuberance. In the 70S ribosome it contacts protein S13 of the 30S subunit (bridge B1b), connecting the 2 subunits; this bridge is implicated in subunit movement. Contacts the P site tRNA; the 5S rRNA and some of its associated proteins might help stabilize positioning of ribosome-bound tRNAs. This is Large ribosomal subunit protein uL5 from Synechocystis sp. (strain ATCC 27184 / PCC 6803 / Kazusa).